The following is a 339-amino-acid chain: Centromere protein N (339 aa).

A phosphoserine mark is found at serine 226, serine 235, and serine 282.

The protein belongs to the CENP-N/CHL4 family. In terms of assembly, component of the CENPA-NAC complex, at least composed of CENPA, CENPC, CENPH, CENPM, CENPN, CENPT and CENPU. The CENPA-NAC complex interacts with the CENPA-CAD complex, composed of CENPI, CENPK, CENPL, CENPO, CENPP, CENPQ, CENPR and CENPS. Interacts directly with CENPA. Identified in a centromere complex containing histones H2A, H2B and H4, and at least CENPA, CENPB, CENPC, CENPT, CENPN, HJURP, SUPT16H, SSRP1 and RSF1.

Its subcellular location is the nucleus. The protein localises to the chromosome. It is found in the centromere. The protein resides in the kinetochore. Its function is as follows. Component of the CENPA-NAC (nucleosome-associated) complex, a complex that plays a central role in assembly of kinetochore proteins, mitotic progression and chromosome segregation. The CENPA-NAC complex recruits the CENPA-CAD (nucleosome distal) complex and may be involved in incorporation of newly synthesized CENPA into centromeres. CENPN is the first protein to bind specifically to CENPA nucleosomes and the direct binding of CENPA nucleosomes by CENPN is required for centromere assembly. Required for chromosome congression and efficiently align the chromosomes on a metaphase plate. This chain is Centromere protein N (CENPN), found in Homo sapiens (Human).